The primary structure comprises 158 residues: NAD(P)H-quinone oxidoreductase subunit J, chloroplastic (158 aa).

This sequence belongs to the complex I 30 kDa subunit family. NDH is composed of at least 16 different subunits, 5 of which are encoded in the nucleus.

The protein resides in the plastid. It localises to the chloroplast thylakoid membrane. The catalysed reaction is a plastoquinone + NADH + (n+1) H(+)(in) = a plastoquinol + NAD(+) + n H(+)(out). It carries out the reaction a plastoquinone + NADPH + (n+1) H(+)(in) = a plastoquinol + NADP(+) + n H(+)(out). In terms of biological role, NDH shuttles electrons from NAD(P)H:plastoquinone, via FMN and iron-sulfur (Fe-S) centers, to quinones in the photosynthetic chain and possibly in a chloroplast respiratory chain. The immediate electron acceptor for the enzyme in this species is believed to be plastoquinone. Couples the redox reaction to proton translocation, and thus conserves the redox energy in a proton gradient. The protein is NAD(P)H-quinone oxidoreductase subunit J, chloroplastic of Dioscorea elephantipes (Elephant's foot yam).